The sequence spans 302 residues: Riboflavin transporter (302 aa).

A run of 8 helical transmembrane segments spans residues 16–36 (AVVG…LNVV), 44–64 (LAFP…LFSL), 87–107 (VVLA…VPIW), 109–129 (AIAL…LFLG), 158–178 (IGWA…SSLI), 191–213 (ITVW…AGFA), 227–247 (GLLT…ADAA), and 264–284 (GWLF…ALIL). EamA domains are found at residues 30–151 (FSLL…MIIL) and 170–291 (LLWG…LFIM).

Belongs to the drug/metabolite transporter (DMT) superfamily. 10 TMS drug/metabolite exporter (DME) (TC 2.A.7.3) family.

The protein resides in the cell membrane. Functionally, transports riboflavin into the cell. Can also transport FMN and FAD. Required for normal nodule development during colonization of pea plant roots. This is Riboflavin transporter from Rhizobium johnstonii (strain DSM 114642 / LMG 32736 / 3841) (Rhizobium leguminosarum bv. viciae).